The following is a 695-amino-acid chain: Threonine--tRNA ligase (695 aa).

The 76-residue stretch at 1–76 (MPRIPSPPQA…TTTDVVEPVT (76 aa)) folds into the TGS domain. Residues 279–585 (DHRKLGVELD…LLEHHAGAFP (307 aa)) are catalytic. 3 residues coordinate Zn(2+): cysteine 384, histidine 435, and histidine 562.

Belongs to the class-II aminoacyl-tRNA synthetase family. In terms of assembly, homodimer. The cofactor is Zn(2+).

The protein resides in the cytoplasm. The catalysed reaction is tRNA(Thr) + L-threonine + ATP = L-threonyl-tRNA(Thr) + AMP + diphosphate + H(+). Its function is as follows. Catalyzes the attachment of threonine to tRNA(Thr) in a two-step reaction: L-threonine is first activated by ATP to form Thr-AMP and then transferred to the acceptor end of tRNA(Thr). Also edits incorrectly charged L-seryl-tRNA(Thr). This chain is Threonine--tRNA ligase, found in Leifsonia xyli subsp. xyli (strain CTCB07).